Here is a 307-residue protein sequence, read N- to C-terminus: Elongation factor Ts (307 aa).

Residues 79-82 (TDFV) form an involved in Mg(2+) ion dislocation from EF-Tu region.

This sequence belongs to the EF-Ts family.

The protein resides in the cytoplasm. Functionally, associates with the EF-Tu.GDP complex and induces the exchange of GDP to GTP. It remains bound to the aminoacyl-tRNA.EF-Tu.GTP complex up to the GTP hydrolysis stage on the ribosome. This is Elongation factor Ts from Sinorhizobium medicae (strain WSM419) (Ensifer medicae).